The sequence spans 486 residues: Protein nucleotidyltransferase YdiU (486 aa).

The ATP site is built by glycine 89, glycine 91, arginine 92, lysine 112, aspartate 124, glycine 125, arginine 175, and arginine 182. Residue aspartate 251 is the Proton acceptor of the active site. The Mg(2+) site is built by asparagine 252 and aspartate 261. Residue aspartate 261 coordinates ATP.

It belongs to the SELO family. Mg(2+) serves as cofactor. The cofactor is Mn(2+).

It catalyses the reaction L-seryl-[protein] + ATP = 3-O-(5'-adenylyl)-L-seryl-[protein] + diphosphate. The catalysed reaction is L-threonyl-[protein] + ATP = 3-O-(5'-adenylyl)-L-threonyl-[protein] + diphosphate. It carries out the reaction L-tyrosyl-[protein] + ATP = O-(5'-adenylyl)-L-tyrosyl-[protein] + diphosphate. The enzyme catalyses L-histidyl-[protein] + UTP = N(tele)-(5'-uridylyl)-L-histidyl-[protein] + diphosphate. It catalyses the reaction L-seryl-[protein] + UTP = O-(5'-uridylyl)-L-seryl-[protein] + diphosphate. The catalysed reaction is L-tyrosyl-[protein] + UTP = O-(5'-uridylyl)-L-tyrosyl-[protein] + diphosphate. In terms of biological role, nucleotidyltransferase involved in the post-translational modification of proteins. It can catalyze the addition of adenosine monophosphate (AMP) or uridine monophosphate (UMP) to a protein, resulting in modifications known as AMPylation and UMPylation. The chain is Protein nucleotidyltransferase YdiU from Shouchella clausii (strain KSM-K16) (Alkalihalobacillus clausii).